A 124-amino-acid polypeptide reads, in one-letter code: Heat-labile enterotoxin B chain (124 aa).

The signal sequence occupies residues 1–21 (MNKVKCYVLFTALLSSLYAHG). C30 and C107 are oxidised to a cystine.

As to quaternary structure, heterohexamer of one A chain and of five B chains.

Functionally, the biological activity of the toxin is produced by the A chain, which activates intracellular adenyl cyclase. The sequence is that of Heat-labile enterotoxin B chain (eltB) from Escherichia coli.